Reading from the N-terminus, the 282-residue chain is 2-dehydro-3-deoxyphosphooctonate aldolase (282 aa).

Belongs to the KdsA family.

Its subcellular location is the cytoplasm. The enzyme catalyses D-arabinose 5-phosphate + phosphoenolpyruvate + H2O = 3-deoxy-alpha-D-manno-2-octulosonate-8-phosphate + phosphate. The protein operates within carbohydrate biosynthesis; 3-deoxy-D-manno-octulosonate biosynthesis; 3-deoxy-D-manno-octulosonate from D-ribulose 5-phosphate: step 2/3. Its pathway is bacterial outer membrane biogenesis; lipopolysaccharide biosynthesis. In Shewanella sediminis (strain HAW-EB3), this protein is 2-dehydro-3-deoxyphosphooctonate aldolase.